The chain runs to 364 residues: MASFMKQLSLVLSFIALALAGCAVYQNTQTAMKDQLKVTPTWLDNTLKSTNLLSLGLGKPSGGKLGDEACVFSAVKEVVVAAINAEARMGASLIRLFFHDCFVDGCDAGLLLNDTATFTGEQTAAGNNNSVRGFAVIEQAKQNVKTQMPDMSVSCADILSIAARDSFEKFSGSTYTVTLGRKDARTANFTGANTQLVGPNENLTSQLTKFAAKGFNGTEMVALLGSHTIGFARCPLLCISTFINPARVSTLNCNCSGTVNATGLVGLDPTPTTWDQRYFSDVVNDQGLLFSDNELLKGNTTNAAVRRYRDAMGAFLTDFAAAMVKMSNLPPSPGVALEIRDVCSRVNANSVDPCEESRLLASPD.

A signal peptide spans 1–20 (MASFMKQLSLVLSFIALALA). Residues 21–66 (GCAVYQNTQTAMKDQLKVTPTWLDNTLKSTNLLSLGLGKPSGGKLG) constitute a propeptide that is removed on maturation. The active-site Proton acceptor is histidine 99. Aspartate 100, valine 103, glycine 105, and aspartate 107 together coordinate Ca(2+). Cysteine 101 and cysteine 106 form a disulfide bridge. Residues asparagine 113, asparagine 188, asparagine 202, and asparagine 216 are each glycosylated (N-linked (GlcNAc...) asparagine). 2 disulfides stabilise this stretch: cysteine 155/cysteine 343 and cysteine 234/cysteine 255. Residue histidine 227 participates in heme b binding. Ca(2+) is bound at residue threonine 228. N-linked (GlcNAc...) asparagine glycans are attached at residues asparagine 254 and asparagine 260. Ca(2+) is bound by residues aspartate 268, threonine 270, and aspartate 275. Asparagine 299 carries an N-linked (GlcNAc...) asparagine glycan.

This sequence belongs to the peroxidase family. Classical plant (class III) peroxidase subfamily. Ca(2+) is required as a cofactor. It depends on heme b as a cofactor. Highly expressed in suspension cultured cells and calli. Weak expression also found in the stems of intact plants. No expression in leaf, tuberous root and non-tuberous root.

The protein resides in the secreted. The enzyme catalyses 2 a phenolic donor + H2O2 = 2 a phenolic radical donor + 2 H2O. Functionally, removal of H(2)O(2), oxidation of toxic reductants, biosynthesis and degradation of lignin, suberization, auxin catabolism, response to environmental stresses such as wounding, pathogen attack and oxidative stress. These functions might be dependent on each isozyme/isoform in each plant tissue. May contribute to protection against cold-induced oxidative stress. The chain is Anionic peroxidase from Ipomoea batatas (Sweet potato).